A 117-amino-acid polypeptide reads, in one-letter code: Holo-[acyl-carrier-protein] synthase (117 aa).

Asp8 and Glu55 together coordinate Mg(2+).

This sequence belongs to the P-Pant transferase superfamily. AcpS family. The cofactor is Mg(2+).

It is found in the cytoplasm. It catalyses the reaction apo-[ACP] + CoA = holo-[ACP] + adenosine 3',5'-bisphosphate + H(+). Its function is as follows. Transfers the 4'-phosphopantetheine moiety from coenzyme A to a Ser of acyl-carrier-protein. The sequence is that of Holo-[acyl-carrier-protein] synthase from Finegoldia magna (strain ATCC 29328 / DSM 20472 / WAL 2508) (Peptostreptococcus magnus).